The following is a 468-amino-acid chain: UDP-N-acetylmuramate--L-alanine ligase (468 aa).

Residue 112-118 (GTHGKTT) coordinates ATP.

It belongs to the MurCDEF family.

Its subcellular location is the cytoplasm. It catalyses the reaction UDP-N-acetyl-alpha-D-muramate + L-alanine + ATP = UDP-N-acetyl-alpha-D-muramoyl-L-alanine + ADP + phosphate + H(+). It participates in cell wall biogenesis; peptidoglycan biosynthesis. Functionally, cell wall formation. In Bordetella pertussis (strain Tohama I / ATCC BAA-589 / NCTC 13251), this protein is UDP-N-acetylmuramate--L-alanine ligase.